The primary structure comprises 991 residues: Translation initiation factor IF-2 (991 aa).

3 disordered regions span residues 53–85, 97–175, and 312–395; these read SHGTSGADRKKITLTKKSTSEIKQADASGKART, VKRD…EAAE, and GIKG…DRGG. Composition is skewed to basic and acidic residues over residues 97–113 and 125–175; these read VKRDDPTGASSESHDSQ and ELQR…EAAE. Residues 323–338 are compositionally biased toward low complexity; the sequence is AAGAPAPGAAPGAAAK. Residues 339 to 349 are compositionally biased toward basic and acidic residues; it reads PGEKKSVKSEK. In terms of domain architecture, tr-type G spans 491 to 658; the sequence is PRPPVVTVMG…QVLLQAEVLE (168 aa). Residues 500 to 507 form a G1 region; the sequence is GHVDHGKT. Position 500-507 (500-507) interacts with GTP; it reads GHVDHGKT. The interval 525–529 is G2; the sequence is GITQH. Residues 546–549 are G3; that stretch reads DTPG. GTP contacts are provided by residues 546–550 and 600–603; these read DTPGH and NKID. Positions 600–603 are G4; that stretch reads NKID. The G5 stretch occupies residues 636–638; that stretch reads SAK.

Belongs to the TRAFAC class translation factor GTPase superfamily. Classic translation factor GTPase family. IF-2 subfamily.

Its subcellular location is the cytoplasm. Its function is as follows. One of the essential components for the initiation of protein synthesis. Protects formylmethionyl-tRNA from spontaneous hydrolysis and promotes its binding to the 30S ribosomal subunits. Also involved in the hydrolysis of GTP during the formation of the 70S ribosomal complex. This Leptothrix cholodnii (strain ATCC 51168 / LMG 8142 / SP-6) (Leptothrix discophora (strain SP-6)) protein is Translation initiation factor IF-2.